The chain runs to 663 residues: UvrABC system protein B (663 aa).

The Helicase ATP-binding domain maps to 31–418; that stretch reads DNIEGGEKAQ…TDTVVEQIIR (388 aa). 44-51 is a binding site for ATP; the sequence is GATGTGKT. Residues 97-120 carry the Beta-hairpin motif; that stretch reads YYDYYQPEAYVPSSDTYIEKDSSV. The Helicase C-terminal domain maps to 435–601; it reads QMDDLLGEIN…TIKKEIRDLI (167 aa). One can recognise a UVR domain in the interval 627–662; it reads QAEIKALQQQMQEAAELLDFELAAQIRDVILELKAI.

The protein belongs to the UvrB family. Forms a heterotetramer with UvrA during the search for lesions. Interacts with UvrC in an incision complex.

It localises to the cytoplasm. In terms of biological role, the UvrABC repair system catalyzes the recognition and processing of DNA lesions. A damage recognition complex composed of 2 UvrA and 2 UvrB subunits scans DNA for abnormalities. Upon binding of the UvrA(2)B(2) complex to a putative damaged site, the DNA wraps around one UvrB monomer. DNA wrap is dependent on ATP binding by UvrB and probably causes local melting of the DNA helix, facilitating insertion of UvrB beta-hairpin between the DNA strands. Then UvrB probes one DNA strand for the presence of a lesion. If a lesion is found the UvrA subunits dissociate and the UvrB-DNA preincision complex is formed. This complex is subsequently bound by UvrC and the second UvrB is released. If no lesion is found, the DNA wraps around the other UvrB subunit that will check the other stand for damage. In Streptococcus agalactiae serotype III (strain NEM316), this protein is UvrABC system protein B.